A 711-amino-acid polypeptide reads, in one-letter code: Glycine--tRNA ligase beta subunit (711 aa).

It belongs to the class-II aminoacyl-tRNA synthetase family. As to quaternary structure, tetramer of two alpha and two beta subunits.

The protein resides in the cytoplasm. The catalysed reaction is tRNA(Gly) + glycine + ATP = glycyl-tRNA(Gly) + AMP + diphosphate. This chain is Glycine--tRNA ligase beta subunit, found in Polaromonas naphthalenivorans (strain CJ2).